Reading from the N-terminus, the 398-residue chain is ATP-dependent RNA helicase eIF4A (398 aa).

Residues 25-53 carry the Q motif motif; it reads DSFDSMELKPELLRGVYAYGFERPSAIQQ. The Helicase ATP-binding domain occupies 56 to 226; sequence ILPIVKGNDV…TKFMRDPVRI (171 aa). 69–76 serves as a coordination point for ATP; the sequence is AQSGTGKT. The DEAD box signature appears at 174–177; it reads DEAD. Residues 237–398 form the Helicase C-terminal domain; it reads GIKQFYIAVE…EMPMNVADLI (162 aa).

The protein belongs to the DEAD box helicase family. eIF4A subfamily. Component of the eIF4F complex, which composition varies with external and internal environmental conditions. It is composed of at least eIF4A, eIF4E and eIF4G.

Its subcellular location is the cytoplasm. The catalysed reaction is ATP + H2O = ADP + phosphate + H(+). Its function is as follows. ATP-dependent RNA helicase which is a subunit of the eIF4F complex involved in cap recognition and is required for mRNA binding to ribosome. In the current model of translation initiation, eIF4A unwinds RNA secondary structures in the 5'-UTR of mRNAs which is necessary to allow efficient binding of the small ribosomal subunit, and subsequent scanning for the initiator codon. This is ATP-dependent RNA helicase eIF4A (tif1) from Emericella nidulans (strain FGSC A4 / ATCC 38163 / CBS 112.46 / NRRL 194 / M139) (Aspergillus nidulans).